The chain runs to 1198 residues: Potassium/sodium hyperpolarization-activated cyclic nucleotide-gated channel 4 (1198 aa).

The Cytoplasmic portion of the chain corresponds to 1-266 (MDKLPPSMRK…PYSDFRFYWD (266 aa)). Positions 25–183 (IMDEEEDGEE…PASASCEQPS (159 aa)) are disordered. Over residues 26–36 (MDEEEDGEEEG) the composition is skewed to acidic residues. Residues 105–118 (SRGGGSGGAGGGSS) show a composition bias toward gly residues. The segment covering 121–132 (HLHDSAEERRLI) has biased composition (basic and acidic residues). At Ser139 the chain carries Phosphoserine. Residues 164–174 (ASPPPQQPPQP) show a composition bias toward pro residues. Residues 209–260 (GQSGFMQRQFGAMLQPGVNKFSLRMFGSQKAVEREQERVKSAGFWIIHPYSD) form an involved in subunit assembly region. A helical transmembrane segment spans residues 267 to 287 (LTMLLLMVGNLIIIPVGITFF). At 288 to 293 (KDENTT) the chain is on the extracellular side. The chain crosses the membrane as a helical span at residues 294-314 (PWIVFNVVSDTFFLIDLVLNF). The Cytoplasmic portion of the chain corresponds to 315–340 (RTGIVVEDNTEIILDPQRIKMKYLKS). The chain crosses the membrane as a helical span at residues 341-361 (WFVVDFISSIPVDYIFLIVET). Residues 362-368 (RIDSEVY) lie on the Extracellular side of the membrane. A helical; Voltage-sensor transmembrane segment spans residues 369–389 (KTARALRIVRFTKILSLLRLL). Residues 390–420 (RLSRLIRYIHQWEEIFHMTYDLASAVVRIVN) are Cytoplasmic-facing. The helical transmembrane segment at 421–441 (LIGMMLLLCHWDGCLQFLVPM) threads the bilayer. Topologically, residues 442–464 (LQDFPHDCWVSINGMVNNSWGKQ) are extracellular. Asn458 carries an N-linked (GlcNAc...) asparagine glycan. The segment at residues 465 to 486 (YSYALFKAMSHMLCIGYGRQAP) is an intramembrane region (pore-forming). The Extracellular portion of the chain corresponds to 487 to 496 (VGMSDVWLTM). A helical membrane pass occupies residues 497–517 (LSMIVGATCYAMFIGHATALI). Residues 518 to 1198 (QSLDSSRRQY…PVRSKLPSNL (681 aa)) lie on the Cytoplasmic side of the membrane. 3',5'-cyclic GMP-binding residues include Tyr559, Lys562, Phe564, and Glu566. 3',5'-cyclic AMP is bound by residues Gly659, Glu660, Cys662, Arg669, Thr670, Val673, and Arg710. The disordered stretch occupies residues 804–1198 (AIFRPPPGPG…PVRSKLPSNL (395 aa)). 2 stretches are compositionally biased toward low complexity: residues 831-856 (SLIP…SSSS) and 866-880 (SAPP…SSSS). The segment covering 881–894 (SPPPGACSSPPAPT) has biased composition (pro residues). 3 stretches are compositionally biased toward low complexity: residues 895 to 905 (PSTSTAATTTG), 913 to 937 (LGGS…SPQA), and 965 to 985 (RSPS…SPGL). Residues 1027–1040 (GHSPGPPRTFPSAP) are compositionally biased toward pro residues. Positions 1043–1054 (ASGSHGSLLLPP) are enriched in low complexity. Ser1103 and Ser1106 each carry phosphoserine. Over residues 1120–1132 (AGGGSGSSGGLGP) the composition is skewed to gly residues.

Belongs to the potassium channel HCN family. Homotetramer. The potassium channel is composed of a homo- or heterotetrameric complex of pore-forming subunits. Interacts with PEX5L with a 4:4 HCN4:PEX5L stoichiometry; reduces the effects of cAMP on the voltage-dependence and rate of activation. Interacts with IRAG1; regulates HCN4 channel activity. Interacts with IRAG2; regulates HCN4 channel activity. Post-translationally, S-palmitoylated. In terms of tissue distribution, highly expressed in pyramidal and granule layer of the hippocampus, in thalamus anterior nucleus, in the supraoptic nucleus in hypothalamus, in cerebellum, and in trapezoid nuclei and superior olivary complex in the auditory system. Detected in a subset of elongated cells in taste buds.

The protein resides in the cell membrane. It catalyses the reaction K(+)(in) = K(+)(out). The enzyme catalyses Na(+)(in) = Na(+)(out). Activated by cAMP and at 100 times higher concentrationsand to a lesser extent by cGMP and cCMP. cAMP binding causes a conformation change that leads to the assembly of an active tetramer and channel opening. Binding of cAMP removes a tonic inhibition conferred by cyclic nucleotide-binding domain (CNBD) on channel opening. Cyclic dinucleotides can modulate HCN4 channel; cyclic dinucleotides acting as potent antagonists of cAMP. Inhibited by extracellular Cs(+) ions. Auxiliary subunits can also regulate HCN4 channel. IRAG1 causes a gain-of-function by shifting HCN4 activation to more depolarized membrane potentials in the absence of cAMP. In contrast, IRAG2 causes a loss-of-function by inhibiting cAMP-dependent potentiation of HCN4 activation. Hyperpolarization-activated ion channel that are permeable to Na(+) and K(+) ions with very slow activation and inactivation. Exhibits higher selectivity for K(+) over Na(+) ions. Contributes to the native pacemaker currents in heart (If) that regulate the rhythm of heart beat. Contributes to the native pacemaker currents in neurons (Ih). May mediate responses to sour stimuli. This is Potassium/sodium hyperpolarization-activated cyclic nucleotide-gated channel 4 (Hcn4) from Rattus norvegicus (Rat).